A 306-amino-acid chain; its full sequence is tRNA dimethylallyltransferase 2 (306 aa).

11–18 serves as a coordination point for ATP; that stretch reads GPTASGKT. A substrate-binding site is contributed by 13-18; sequence TASGKT. The tract at residues 36-39 is interaction with substrate tRNA; sequence DSRQ.

It belongs to the IPP transferase family. In terms of assembly, monomer. Requires Mg(2+) as cofactor.

The catalysed reaction is adenosine(37) in tRNA + dimethylallyl diphosphate = N(6)-dimethylallyladenosine(37) in tRNA + diphosphate. Its function is as follows. Catalyzes the transfer of a dimethylallyl group onto the adenine at position 37 in tRNAs that read codons beginning with uridine, leading to the formation of N6-(dimethylallyl)adenosine (i(6)A). This chain is tRNA dimethylallyltransferase 2, found in Bacteroides fragilis (strain ATCC 25285 / DSM 2151 / CCUG 4856 / JCM 11019 / LMG 10263 / NCTC 9343 / Onslow / VPI 2553 / EN-2).